The chain runs to 212 residues: Imidazole glycerol phosphate synthase subunit HisH (212 aa).

Positions 3–212 constitute a Glutamine amidotransferase type-1 domain; sequence TVAVIDYGMG…QNFIAWDGRW (210 aa). Cys-81 (nucleophile) is an active-site residue. Active-site residues include His-190 and Glu-192.

In terms of assembly, heterodimer of HisH and HisF.

It localises to the cytoplasm. It carries out the reaction 5-[(5-phospho-1-deoxy-D-ribulos-1-ylimino)methylamino]-1-(5-phospho-beta-D-ribosyl)imidazole-4-carboxamide + L-glutamine = D-erythro-1-(imidazol-4-yl)glycerol 3-phosphate + 5-amino-1-(5-phospho-beta-D-ribosyl)imidazole-4-carboxamide + L-glutamate + H(+). The enzyme catalyses L-glutamine + H2O = L-glutamate + NH4(+). It participates in amino-acid biosynthesis; L-histidine biosynthesis; L-histidine from 5-phospho-alpha-D-ribose 1-diphosphate: step 5/9. In terms of biological role, IGPS catalyzes the conversion of PRFAR and glutamine to IGP, AICAR and glutamate. The HisH subunit catalyzes the hydrolysis of glutamine to glutamate and ammonia as part of the synthesis of IGP and AICAR. The resulting ammonia molecule is channeled to the active site of HisF. The polypeptide is Imidazole glycerol phosphate synthase subunit HisH (Pseudomonas putida (strain ATCC 47054 / DSM 6125 / CFBP 8728 / NCIMB 11950 / KT2440)).